The following is a 686-amino-acid chain: Rhophilin-2 (686 aa).

The REM-1 domain maps to Asn26–Val100. The segment at Gln46–Asn66 is interaction with Rho. Residues Pro111–Leu502 enclose the BRO1 domain. The PDZ domain maps to Arg515–Leu593. Residue Thr655 is modified to Phosphothreonine.

This sequence belongs to the RHPN family. Interacts with GTP-bound RhoA and RhoB. Interacts with both GTP- and GDP-bound RhoA. Interacts with KRT18.

The protein resides in the cytoplasm. It localises to the perinuclear region. Binds specifically to GTP-Rho. May function in a Rho pathway to limit stress fiber formation and/or increase the turnover of F-actin structures in the absence of high levels of RhoA activity. This chain is Rhophilin-2 (Rhpn2), found in Mus musculus (Mouse).